The sequence spans 445 residues: UPF0210 protein SMU_73 (445 aa).

This sequence belongs to the UPF0210 family. As to quaternary structure, homodimer.

This Streptococcus mutans serotype c (strain ATCC 700610 / UA159) protein is UPF0210 protein SMU_73.